The sequence spans 327 residues: Ran-specific GTPase-activating protein 2 (327 aa).

2 disordered regions span residues 1 to 96 (MSET…KKED) and 109 to 205 (GFGV…KQEV). Over residues 24–83 (PIDKLDGTPKRPREKDQDEQAEETSDKSEAPNKNDEEKKEEGKKDQEPSHKKIKVDDGKT) the composition is skewed to basic and acidic residues. Thr31 is subject to Phosphothreonine. The segment covering 122–133 (ATTSTESLPASD) has biased composition (polar residues). Low complexity predominate over residues 140–152 (FAFGSGLSFGSGF). 2 stretches are compositionally biased toward basic and acidic residues: residues 157 to 179 (NKTE…KVHS) and 189 to 205 (EDTK…KQEV). Ser179 carries the phosphoserine modification. The 137-residue stretch at 191 to 327 (TKDKPKPLKL…YNIIVKSVPK (137 aa)) folds into the RanBD1 domain.

In terms of assembly, interacts with GSP1, XPO1 and SRM1.

The protein localises to the nucleus. Functionally, important for the export of protein containing nuclear export signal (NES) out of the nucleus. Stimulates the GTPase activity of GSP1. This is Ran-specific GTPase-activating protein 2 (YRB2) from Saccharomyces cerevisiae (strain ATCC 204508 / S288c) (Baker's yeast).